The primary structure comprises 391 residues: Thioredoxin-interacting protein (391 aa).

Residue Lys-212 forms a Glycyl lysine isopeptide (Lys-Gly) (interchain with G-Cter in ubiquitin) linkage. Ser-361 is modified (phosphoserine).

It belongs to the arrestin family. In terms of assembly, homodimer; disulfide-linked. Interacts with TXN/thioredoxin through its redox-active site. Interacts with transcriptional repressors ZBTB16, ZBTB32 and HDAC1. Interacts with DDIT4. In terms of processing, ubiquitinated; undergoes heterotypic 'Lys-48'-/'Lys-63'-branched polyubiquitination catalyzed by ITCH and UBR5 resulting in proteasomal degradation. Deubiquitinated by USP5, leading to TXNIP stabilization.

The protein resides in the cytoplasm. In terms of biological role, may act as an oxidative stress mediator by inhibiting thioredoxin activity or by limiting its bioavailability. Interacts with COPS5 and restores COPS5-induced suppression of CDKN1B stability, blocking the COPS5-mediated translocation of CDKN1B from the nucleus to the cytoplasm. Functions as a transcriptional repressor, possibly by acting as a bridge molecule between transcription factors and corepressor complexes, and over-expression will induce G0/G1 cell cycle arrest. Required for the maturation of natural killer cells. Acts as a suppressor of tumor cell growth. Inhibits the proteasomal degradation of DDIT4, and thereby contributes to the inhibition of the mammalian target of rapamycin complex 1 (mTORC1). In Sus scrofa (Pig), this protein is Thioredoxin-interacting protein (TXNIP).